Consider the following 894-residue polypeptide: Desmocollin-1 (894 aa).

Positions 1 to 29 are cleaved as a signal peptide; it reads MALASAAPGSIFCKQLLFSLLVLTLLCDA. Positions 30–134 are excised as a propeptide; sequence CQKVYLRVPS…KDTALKRSKR (105 aa). Cadherin domains follow at residues 135–242, 243–354, 355–471, 472–575, and 576–682; these read RWAP…APYF, EHRV…PPSF, TETS…GPEC, HPPV…DHAP, and QIDK…STRD. At 135–691 the chain is on the extracellular side; that stretch reads RWAPIPASLM…DVRPNVILGR (557 aa). Asparagine 165 carries N-linked (GlcNAc...) asparagine glycosylation. A Phosphothreonine modification is found at threonine 385. The N-linked (GlcNAc...) asparagine glycan is linked to asparagine 546. Residues 692 to 714 traverse the membrane as a helical segment; it reads WAILAMVLGSVLLLCILFTCFCV. Residues 715–894 are Cytoplasmic-facing; the sequence is TAKRTVKKCF…RTLAKTCIKK (180 aa).

As to quaternary structure, binds to JUP/plakoglobin. Strongly expressed in epidermis, less in lymph node and tongue.

Its subcellular location is the cell membrane. The protein resides in the cell junction. It localises to the desmosome. Functionally, a component of desmosome cell-cell junctions which are required for positive regulation of cellular adhesion. Required for desmosome adhesion strength between the granular layers of the epidermis, as a result moderates epidermal proliferation and differentiation. Is therefore required to maintain postnatal epidermal barrier function and normal hair follicle morphology into adulthood. The polypeptide is Desmocollin-1 (DSC1) (Homo sapiens (Human)).